The primary structure comprises 93 residues: Small ribosomal subunit protein uS19 (93 aa).

This sequence belongs to the universal ribosomal protein uS19 family.

Functionally, protein S19 forms a complex with S13 that binds strongly to the 16S ribosomal RNA. This chain is Small ribosomal subunit protein uS19, found in Geotalea daltonii (strain DSM 22248 / JCM 15807 / FRC-32) (Geobacter daltonii).